Reading from the N-terminus, the 428-residue chain is Enolase (428 aa).

Glutamine 162 serves as a coordination point for (2R)-2-phosphoglycerate. Catalysis depends on glutamate 204, which acts as the Proton donor. Residues aspartate 241, glutamate 282, and aspartate 309 each coordinate Mg(2+). Positions 334, 363, 364, and 385 each coordinate (2R)-2-phosphoglycerate. Lysine 334 (proton acceptor) is an active-site residue.

This sequence belongs to the enolase family. The cofactor is Mg(2+).

It localises to the cytoplasm. The protein localises to the secreted. Its subcellular location is the cell surface. The catalysed reaction is (2R)-2-phosphoglycerate = phosphoenolpyruvate + H2O. Its pathway is carbohydrate degradation; glycolysis; pyruvate from D-glyceraldehyde 3-phosphate: step 4/5. In terms of biological role, catalyzes the reversible conversion of 2-phosphoglycerate (2-PG) into phosphoenolpyruvate (PEP). It is essential for the degradation of carbohydrates via glycolysis. The chain is Enolase from Mycobacterium ulcerans (strain Agy99).